The primary structure comprises 878 residues: Alanine--tRNA ligase (878 aa).

Zn(2+) contacts are provided by H566, H570, C668, and H672.

It belongs to the class-II aminoacyl-tRNA synthetase family. It depends on Zn(2+) as a cofactor.

The protein localises to the cytoplasm. It carries out the reaction tRNA(Ala) + L-alanine + ATP = L-alanyl-tRNA(Ala) + AMP + diphosphate. In terms of biological role, catalyzes the attachment of alanine to tRNA(Ala) in a two-step reaction: alanine is first activated by ATP to form Ala-AMP and then transferred to the acceptor end of tRNA(Ala). Also edits incorrectly charged Ser-tRNA(Ala) and Gly-tRNA(Ala) via its editing domain. The chain is Alanine--tRNA ligase from Bacillus subtilis (strain 168).